The following is a 372-amino-acid chain: MIPGSTSGISFSRILSRQTSHQDATQHTDAQQAEIQQAAEDSSPGAEVQKFVQSTDEMSAALAQFRNRRDYEKKSSNLSNSFERVLEDEALPKAKQILKLISVHGGALEDFLRQARSLFPDPSDLVLVLRELLRRKDLEEIVRKKLESLLKHVEEQTDPKTLKAGINCALKARLFGKTLSLKPGLLRASYRQFIQSESHEVEIYSDWIASYGYQRRLVVLDFIEGSLLTDIDANDASCSRLEFGQLLRRLTQLKMLRSADLLFVSTLLSYSFTKAFNAEESSWLLLMLSLLQQPHEVDSLLADIIGLNALLLSHKEHASFLQIFYQVCKAIPSSLFYEEYWQEELLMALRSMTDIAYKHEMAEQRRTIEKLS.

Residues 1 to 19 (MIPGSTSGISFSRILSRQT) show a composition bias toward polar residues. A disordered region spans residues 1-46 (MIPGSTSGISFSRILSRQTSHQDATQHTDAQQAEIQQAAEDSSPGA). Positions 21–40 (HQDATQHTDAQQAEIQQAAE) are enriched in low complexity.

The protein localises to the cell membrane. Functionally, involved in the triggering of intracellular events that lead to microbial internalization. These events include increase in calcium level, redistribution of actin microfilaments, and changes in the normal structure of the microvilli. Encoded within the type III secretion system (SPI-1 T3SS), it is essential for the translocation of protein effectors into host cells. Forms a complex with SipB and SipC in the presence of their chaperone SicA. Positively regulates the secretion of SPI-1 T3SS effector proteins SipB, SipC and SipD and negatively influences the secretion of SipA, SopA and SptP. This is Invasion protein InvE (invE) from Salmonella typhimurium (strain LT2 / SGSC1412 / ATCC 700720).